The chain runs to 301 residues: Mitochondrial substrate carrier family protein X (301 aa).

Residues Met1–Asn23 are Mitochondrial intermembrane-facing. Solcar repeat units follow at residues Pro18–Arg109, Ile117–Asn199, and Ile208–Phe296. The chain crosses the membrane as a helical span at residues Leu24–Val44. The Mitochondrial matrix segment spans residues Lys45 to Glu75. A helical membrane pass occupies residues Gly76–Ala97. At Leu98–Glu122 the chain is on the mitochondrial intermembrane side. Residues Val123–Val143 traverse the membrane as a helical segment. The Mitochondrial matrix segment spans residues Lys144–Lys173. Residues Gly174–Gly194 form a helical membrane-spanning segment. The Mitochondrial intermembrane segment spans residues Arg195–Glu207. Residues Ile208–Ser228 form a helical membrane-spanning segment. Topologically, residues Thr229 to Gly271 are mitochondrial matrix. The chain crosses the membrane as a helical span at residues Val272–Ile292. Residues Gln293 to His301 lie on the Mitochondrial intermembrane side of the membrane.

This sequence belongs to the mitochondrial carrier (TC 2.A.29) family.

The protein localises to the mitochondrion inner membrane. Mitochondrial solute carriers shuttle metabolites, nucleotides, and cofactors through the mitochondrial inner membrane. The sequence is that of Mitochondrial substrate carrier family protein X (mcfX) from Dictyostelium discoideum (Social amoeba).